Consider the following 297-residue polypeptide: ER membrane protein complex subunit 2 (297 aa).

The residue at position 2 (alanine 2) is an N-acetylalanine. TPR repeat units follow at residues 87–120 (HRVKRLTGMRFEAMERYDDAIQLYDRILQEDPTN), 155–188 (QEAWHELAELYINEHDYAKAAFCLEELMMTNPYN), and 192–225 (CQQYAEVKYTQGGLENLELSRKYFAQALKLNNRN). Lysine 255 bears the N6-acetyllysine mark.

The protein belongs to the EMC2 family. As to quaternary structure, component of the ER membrane protein complex (EMC).

It localises to the endoplasmic reticulum membrane. Part of the endoplasmic reticulum membrane protein complex (EMC) that enables the energy-independent insertion into endoplasmic reticulum membranes of newly synthesized membrane proteins. Preferentially accommodates proteins with transmembrane domains that are weakly hydrophobic or contain destabilizing features such as charged and aromatic residues. Involved in the cotranslational insertion of multi-pass membrane proteins in which stop-transfer membrane-anchor sequences become ER membrane spanning helices. It is also required for the post-translational insertion of tail-anchored/TA proteins in endoplasmic reticulum membranes. By mediating the proper cotranslational insertion of N-terminal transmembrane domains in an N-exo topology, with translocated N-terminus in the lumen of the ER, controls the topology of multi-pass membrane proteins like the G protein-coupled receptors. By regulating the insertion of various proteins in membranes, it is indirectly involved in many cellular processes. The polypeptide is ER membrane protein complex subunit 2 (Bos taurus (Bovine)).